Consider the following 238-residue polypeptide: Lactate utilization protein A (238 aa).

The protein belongs to the LutA/YkgE family.

In terms of biological role, is involved in L-lactate degradation and allows cells to grow with lactate as the sole carbon source. In Bacillus licheniformis (strain ATCC 14580 / DSM 13 / JCM 2505 / CCUG 7422 / NBRC 12200 / NCIMB 9375 / NCTC 10341 / NRRL NRS-1264 / Gibson 46), this protein is Lactate utilization protein A.